The following is a 525-amino-acid chain: Mannuronan C5-epimerase AlgG (525 aa).

A signal peptide spans 1–29 (MNVQRKLASTQLKPVLLGVLLATSAWSQA). PbH1 repeat units lie at residues 287-309 (ADDVVLKGNTYRDNIIYGIDPHD), 311-334 (SERLVIAENHVYGTKKKHGIIVSR), 336-358 (VNNSWIINNRTHDNKLSGIVLDR), 360-382 (SEHNLVAYNEVYQNHSDGITLYE), and 383-405 (SSNNLIWGNRLINNARHGIRMRN). His-308 (proton acceptor) is an active-site residue.

This sequence belongs to the D-mannuronate C5-epimerase family.

It is found in the periplasm. The enzyme catalyses [(1-&gt;4)-beta-D-mannuronosyl](n) = [alginate](n). It participates in glycan biosynthesis; alginate biosynthesis. Its activity is regulated as follows. Inhibited by zinc. Catalyzes the epimerization of beta-D-mannuronate to alpha-L-guluronate during the synthesis of the linear polysaccharide alginate. In addition, is part of a periplasmic protein complex that protects alginate from degradation by AlgL by channeling the newly formed alginate polymer through a scaffold that transfers the alginate polymer through the periplasmic space to the outer membrane secretin AlgE. The chain is Mannuronan C5-epimerase AlgG from Azotobacter vinelandii.